Consider the following 528-residue polypeptide: DEAD-box ATP-dependent RNA helicase CshA (528 aa).

Positions 2–30 match the Q motif motif; that stretch reads TTFRELGLSDSLLQSVESMGFEEATPIQA. One can recognise a Helicase ATP-binding domain in the interval 33–203; it reads IPHALQGKDI…ERFMTEPQHI (171 aa). ATP is bound at residue 46–53; it reads AQTGTGKT. The DEAD box motif lies at 151 to 154; it reads DEAD. One can recognise a Helicase C-terminal domain in the interval 214-374; it reads NIQQFYLEVQ…RMDAPTLDEA (161 aa). The segment at 428-528 is disordered; it reads TTPIALTSEP…RKHHSRKPQA (101 aa). A compositionally biased stretch (basic and acidic residues) spans 458–506; it reads DGNRNRSRDGRGGDGRNRDRNRDGRNRDGNRDRNREGSRDGNRGRRGEG. Residues 518-528 show a composition bias toward basic residues; that stretch reads ERKHHSRKPQA.

The protein belongs to the DEAD box helicase family. CshA subfamily. Oligomerizes, may be a member of the RNA degradosome.

The protein resides in the cytoplasm. The enzyme catalyses ATP + H2O = ADP + phosphate + H(+). In terms of biological role, DEAD-box RNA helicase possibly involved in RNA degradation. Unwinds dsRNA in both 5'- and 3'-directions, has RNA-dependent ATPase activity. This Bacillus thuringiensis (strain Al Hakam) protein is DEAD-box ATP-dependent RNA helicase CshA.